Here is a 297-residue protein sequence, read N- to C-terminus: Lipoyl synthase (297 aa).

Cysteine 37, cysteine 42, cysteine 48, cysteine 63, cysteine 67, cysteine 70, and serine 276 together coordinate [4Fe-4S] cluster. Residues 49–265 (WSRKHATVMI…ERIAKTKGFL (217 aa)) form the Radical SAM core domain.

The protein belongs to the radical SAM superfamily. Lipoyl synthase family. The cofactor is [4Fe-4S] cluster.

It localises to the cytoplasm. It carries out the reaction [[Fe-S] cluster scaffold protein carrying a second [4Fe-4S](2+) cluster] + N(6)-octanoyl-L-lysyl-[protein] + 2 oxidized [2Fe-2S]-[ferredoxin] + 2 S-adenosyl-L-methionine + 4 H(+) = [[Fe-S] cluster scaffold protein] + N(6)-[(R)-dihydrolipoyl]-L-lysyl-[protein] + 4 Fe(3+) + 2 hydrogen sulfide + 2 5'-deoxyadenosine + 2 L-methionine + 2 reduced [2Fe-2S]-[ferredoxin]. The protein operates within protein modification; protein lipoylation via endogenous pathway; protein N(6)-(lipoyl)lysine from octanoyl-[acyl-carrier-protein]: step 2/2. In terms of biological role, catalyzes the radical-mediated insertion of two sulfur atoms into the C-6 and C-8 positions of the octanoyl moiety bound to the lipoyl domains of lipoate-dependent enzymes, thereby converting the octanoylated domains into lipoylated derivatives. This Rickettsia typhi (strain ATCC VR-144 / Wilmington) protein is Lipoyl synthase.